The chain runs to 507 residues: RNA-binding protein MEX3B (507 aa).

Residues 1-22 (MPSSLFADMERNGSGGGGGETL) form a disordered region. KH domains follow at residues 59-120 (MTEC…RREI) and 155-216 (QTTI…REEI). 2 disordered regions span residues 256 to 279 (NQSS…LGSA) and 426 to 450 (SSSS…GMRR). The segment covering 426–446 (SSSSSSSSSSSSSSSSSSSSS) has biased composition (low complexity). An RING-type zinc finger spans residues 456–496 (CSICFESEVIAALVPCGHNLFCMECANRICEKNQPQCPVCH).

Its subcellular location is the cytoplasm. It localises to the nucleus. The protein localises to the cytoplasmic granule. The protein resides in the P-body. Its function is as follows. RNA-binding protein. May be involved in post-transcriptional regulatory mechanisms. The protein is RNA-binding protein MEX3B (mex3b) of Xenopus laevis (African clawed frog).